Reading from the N-terminus, the 372-residue chain is MSKKDYYDLLEVGRNASIDEIKKAYKKLALRYHPDRNPGNQEAEEKFKEVTAAYEVLSDSEKRAGYDRYGHEGASGGFQGFSSAGDFSDIFNDFFGGGFGGGASRSRAKRSTTGVSGADLRYDLEITLEDAFKGIQAPIHYVTNVKCDTCQGTGGEGAIKPVQCHTCQGSGRIRTQQGFFTIERTCTTCYGEGEIIQNKCKKCGGSGRRRDEVNISVSIPKGIEEGAKVRISGKGEAGTKGGKSGDLYVYVKIIFHKIFARNKADLHCKVPIRMTLAVLGGEIDIQSIDGAKIKVKVPEGTQTGTKLRCREKGMPYMNSHARGDLYVQVIVETLNPKNLTKKQIELLKALEEEENASVQQQSEGFFSKVKKK.

One can recognise a J domain in the interval 5–70 (DYYDLLEVGR…EKRAGYDRYG (66 aa)). A CR-type zinc finger spans residues 134 to 212 (GIQAPIHYVT…CGGSGRRRDE (79 aa)). Residues Cys-147, Cys-150, Cys-164, Cys-167, Cys-186, Cys-189, Cys-200, and Cys-203 each coordinate Zn(2+). 4 CXXCXGXG motif repeats span residues 147–154 (CDTCQGTG), 164–171 (CHTCQGSG), 186–193 (CTTCYGEG), and 200–207 (CKKCGGSG).

This sequence belongs to the DnaJ family. In terms of assembly, homodimer. Zn(2+) is required as a cofactor.

The protein resides in the cytoplasm. Participates actively in the response to hyperosmotic and heat shock by preventing the aggregation of stress-denatured proteins and by disaggregating proteins, also in an autonomous, DnaK-independent fashion. Unfolded proteins bind initially to DnaJ; upon interaction with the DnaJ-bound protein, DnaK hydrolyzes its bound ATP, resulting in the formation of a stable complex. GrpE releases ADP from DnaK; ATP binding to DnaK triggers the release of the substrate protein, thus completing the reaction cycle. Several rounds of ATP-dependent interactions between DnaJ, DnaK and GrpE are required for fully efficient folding. Also involved, together with DnaK and GrpE, in the DNA replication of plasmids through activation of initiation proteins. The polypeptide is Chaperone protein DnaJ (Wolbachia pipientis wMel).